The following is a 227-amino-acid chain: ATP synthase F(0) complex subunit a (227 aa).

6 consecutive transmembrane segments (helical) span residues 12–32 (PTYL…ILFP), 69–89 (WAVL…LGLL), 98–118 (QLSL…IIGM), 132–152 (EGTP…SLFI), 180–200 (FVLM…LFLL), and 202–222 (LLEI…LSLY).

It belongs to the ATPase A chain family. Component of the ATP synthase complex composed at least of ATP5F1A/subunit alpha, ATP5F1B/subunit beta, ATP5MC1/subunit c (homooctomer), MT-ATP6/subunit a, MT-ATP8/subunit 8, ATP5ME/subunit e, ATP5MF/subunit f, ATP5MG/subunit g, ATP5MK/subunit k, ATP5MJ/subunit j, ATP5F1C/subunit gamma, ATP5F1D/subunit delta, ATP5F1E/subunit epsilon, ATP5PF/subunit F6, ATP5PB/subunit b, ATP5PD/subunit d, ATP5PO/subunit OSCP. ATP synthase complex consists of a soluble F(1) head domain (subunits alpha(3) and beta(3)) - the catalytic core - and a membrane F(0) domain - the membrane proton channel (subunits c, a, 8, e, f, g, k and j). These two domains are linked by a central stalk (subunits gamma, delta, and epsilon) rotating inside the F1 region and a stationary peripheral stalk (subunits F6, b, d, and OSCP). Interacts with DNAJC30; interaction is direct.

It localises to the mitochondrion inner membrane. The enzyme catalyses H(+)(in) = H(+)(out). In terms of biological role, subunit a, of the mitochondrial membrane ATP synthase complex (F(1)F(0) ATP synthase or Complex V) that produces ATP from ADP in the presence of a proton gradient across the membrane which is generated by electron transport complexes of the respiratory chain. ATP synthase complex consist of a soluble F(1) head domain - the catalytic core - and a membrane F(1) domain - the membrane proton channel. These two domains are linked by a central stalk rotating inside the F(1) region and a stationary peripheral stalk. During catalysis, ATP synthesis in the catalytic domain of F(1) is coupled via a rotary mechanism of the central stalk subunits to proton translocation. With the subunit c (ATP5MC1), forms the proton-conducting channel in the F(0) domain, that contains two crucial half-channels (inlet and outlet) that facilitate proton movement from the mitochondrial intermembrane space (IMS) into the matrix. Protons are taken up via the inlet half-channel and released through the outlet half-channel, following a Grotthuss mechanism. In Salmo salar (Atlantic salmon), this protein is ATP synthase F(0) complex subunit a.